A 227-amino-acid chain; its full sequence is Cytochrome c oxidase subunit 2 (227 aa).

Topologically, residues 1–14 (MAHPVQLGLQDATS) are mitochondrial intermembrane. A helical transmembrane segment spans residues 15–45 (PVMEELITFHDHALMAMSLISLLVLYALFST). The Mitochondrial matrix segment spans residues 46-59 (LTTKLTNTNITDAQ). The chain crosses the membrane as a helical span at residues 60–87 (EMEIIWTILPAIILVLIALPSLRILYLT). Residues 88–227 (DEVNNPSFTI…IFEMGPVFTL (140 aa)) lie on the Mitochondrial intermembrane side of the membrane. Cu cation-binding residues include His-161, Cys-196, Glu-198, Cys-200, His-204, and Met-207. Glu-198 lines the Mg(2+) pocket.

The protein belongs to the cytochrome c oxidase subunit 2 family. As to quaternary structure, component of the cytochrome c oxidase (complex IV, CIV), a multisubunit enzyme composed of 14 subunits. The complex is composed of a catalytic core of 3 subunits MT-CO1, MT-CO2 and MT-CO3, encoded in the mitochondrial DNA, and 11 supernumerary subunits COX4I, COX5A, COX5B, COX6A, COX6B, COX6C, COX7A, COX7B, COX7C, COX8 and NDUFA4, which are encoded in the nuclear genome. The complex exists as a monomer or a dimer and forms supercomplexes (SCs) in the inner mitochondrial membrane with NADH-ubiquinone oxidoreductase (complex I, CI) and ubiquinol-cytochrome c oxidoreductase (cytochrome b-c1 complex, complex III, CIII), resulting in different assemblies (supercomplex SCI(1)III(2)IV(1) and megacomplex MCI(2)III(2)IV(2)). Found in a complex with TMEM177, COA6, COX18, COX20, SCO1 and SCO2. Interacts with TMEM177 in a COX20-dependent manner. Interacts with COX20. Interacts with COX16. Cu cation serves as cofactor.

It localises to the mitochondrion inner membrane. The catalysed reaction is 4 Fe(II)-[cytochrome c] + O2 + 8 H(+)(in) = 4 Fe(III)-[cytochrome c] + 2 H2O + 4 H(+)(out). Its function is as follows. Component of the cytochrome c oxidase, the last enzyme in the mitochondrial electron transport chain which drives oxidative phosphorylation. The respiratory chain contains 3 multisubunit complexes succinate dehydrogenase (complex II, CII), ubiquinol-cytochrome c oxidoreductase (cytochrome b-c1 complex, complex III, CIII) and cytochrome c oxidase (complex IV, CIV), that cooperate to transfer electrons derived from NADH and succinate to molecular oxygen, creating an electrochemical gradient over the inner membrane that drives transmembrane transport and the ATP synthase. Cytochrome c oxidase is the component of the respiratory chain that catalyzes the reduction of oxygen to water. Electrons originating from reduced cytochrome c in the intermembrane space (IMS) are transferred via the dinuclear copper A center (CU(A)) of subunit 2 and heme A of subunit 1 to the active site in subunit 1, a binuclear center (BNC) formed by heme A3 and copper B (CU(B)). The BNC reduces molecular oxygen to 2 water molecules using 4 electrons from cytochrome c in the IMS and 4 protons from the mitochondrial matrix. The chain is Cytochrome c oxidase subunit 2 (MT-CO2) from Cercocebus galeritus (Tana river mangabey).